A 231-amino-acid polypeptide reads, in one-letter code: Orotate phosphoribosyltransferase (231 aa).

5-phospho-alpha-D-ribose 1-diphosphate is bound by residues Lys27, 79-80 (YK), Arg106, Lys107, Lys110, His112, and 133-141 (DDVMTAGTA). Orotate contacts are provided by Thr137 and Arg166.

The protein belongs to the purine/pyrimidine phosphoribosyltransferase family. PyrE subfamily. Homodimer. Mg(2+) serves as cofactor.

The enzyme catalyses orotidine 5'-phosphate + diphosphate = orotate + 5-phospho-alpha-D-ribose 1-diphosphate. The protein operates within pyrimidine metabolism; UMP biosynthesis via de novo pathway; UMP from orotate: step 1/2. In terms of biological role, catalyzes the transfer of a ribosyl phosphate group from 5-phosphoribose 1-diphosphate to orotate, leading to the formation of orotidine monophosphate (OMP). In Bifidobacterium animalis subsp. lactis (strain AD011), this protein is Orotate phosphoribosyltransferase.